A 242-amino-acid chain; its full sequence is Probable transcriptional regulatory protein Bmul_0984/BMULJ_02280 (242 aa).

Belongs to the TACO1 family.

The protein resides in the cytoplasm. The protein is Probable transcriptional regulatory protein Bmul_0984/BMULJ_02280 of Burkholderia multivorans (strain ATCC 17616 / 249).